The sequence spans 86 residues: Electron transfer flavoprotein regulatory factor 1 (86 aa).

The protein belongs to the complex I LYR family. In terms of assembly, homotetramer. Interacts with NDUFAB1. Interacts with ETFA. Interacts with ETFB.

Its subcellular location is the mitochondrion. Acts as a regulator of the electron transfer flavoprotein by promoting the removal of flavin from the ETF holoenzyme (composed of ETFA and ETFB). The sequence is that of Electron transfer flavoprotein regulatory factor 1 from Mus musculus (Mouse).